Here is a 339-residue protein sequence, read N- to C-terminus: Histidine protein methyltransferase 1 (339 aa).

S333 and S338 each carry phosphoserine.

This sequence belongs to the methyltransferase superfamily. METTL18 family.

The protein localises to the cytoplasm. It localises to the nucleus. It carries out the reaction L-histidyl-[protein] + S-adenosyl-L-methionine = N(tele)-methyl-L-histidyl-[protein] + S-adenosyl-L-homocysteine + H(+). Protein-histidine N-methyltransferase that mediates methylation of target protein on His residues. This is Histidine protein methyltransferase 1 from Schizosaccharomyces pombe (strain 972 / ATCC 24843) (Fission yeast).